A 399-amino-acid chain; its full sequence is uncharacterized protein (399 aa).

The segment at serine 254–aspartate 335 is disordered. Positions arginine 255–tyrosine 264 are enriched in polar residues. Basic and acidic residues predominate over residues arginine 310 to aspartate 329.

This is an uncharacterized protein from Xenopus laevis (African clawed frog).